The chain runs to 130 residues: Phosphoribosyl-AMP cyclohydrolase (130 aa).

Aspartate 77 serves as a coordination point for Mg(2+). Position 78 (cysteine 78) interacts with Zn(2+). The Mg(2+) site is built by aspartate 79 and aspartate 81. 2 residues coordinate Zn(2+): cysteine 95 and cysteine 102.

It belongs to the PRA-CH family. In terms of assembly, homodimer. Requires Mg(2+) as cofactor. Zn(2+) serves as cofactor.

Its subcellular location is the cytoplasm. It carries out the reaction 1-(5-phospho-beta-D-ribosyl)-5'-AMP + H2O = 1-(5-phospho-beta-D-ribosyl)-5-[(5-phospho-beta-D-ribosylamino)methylideneamino]imidazole-4-carboxamide. It participates in amino-acid biosynthesis; L-histidine biosynthesis; L-histidine from 5-phospho-alpha-D-ribose 1-diphosphate: step 3/9. Catalyzes the hydrolysis of the adenine ring of phosphoribosyl-AMP. The chain is Phosphoribosyl-AMP cyclohydrolase from Pseudomonas putida (strain ATCC 700007 / DSM 6899 / JCM 31910 / BCRC 17059 / LMG 24140 / F1).